The primary structure comprises 452 residues: Probable ECA polymerase (452 aa).

A run of 11 helical transmembrane segments spans residues 6–26, 37–57, 63–83, 118–138, 155–175, 181–201, 207–227, 228–248, 341–361, 378–398, and 410–430; these read FSGL…LTWF, VFFS…TSVL, VGVA…CFYG, VILM…NGFL, GVAL…VYFL, AWLF…MIVG, IIIA…ISLW, MLVA…LKRY, LVVM…GLII, YKAA…IVLA, and VFFL…FWLF.

This sequence belongs to the WzyE family. Probably part of a complex composed of WzxE, WzyE and WzzE.

The protein resides in the cell inner membrane. It participates in bacterial outer membrane biogenesis; enterobacterial common antigen biosynthesis. Its function is as follows. Probably involved in the polymerization of enterobacterial common antigen (ECA) trisaccharide repeat units. This chain is Probable ECA polymerase, found in Salmonella agona (strain SL483).